The chain runs to 358 residues: Dynein axonemal assembly factor 10 (358 aa).

WD repeat units follow at residues 64-106 (EKSK…SPVY), 116-155 (NAID…TPVV), 163-206 (ETKR…LRWE), 208-250 (NIRN…PSKG), 258-298 (AHKS…QRSK), and 320-358 (LSTQ…LNTV).

As to quaternary structure, interacts with PIH1D1; the interaction associates DNAAF10 with the R2TP complex. Interacts with several dynein axonemal assembly factors.

The protein localises to the dynein axonemal particle. Key assembly factor specifically required for the stability of axonemal dynein heavy chains in cytoplasm. In Danio rerio (Zebrafish), this protein is Dynein axonemal assembly factor 10 (dnaaf10).